The following is a 712-amino-acid chain: Sesterterpene synthase btcA (712 aa).

The terpene cyclase stretch occupies residues 1-332 (MTTIWEHCVD…CANCPRHHAW (332 aa)). D96 lines the Mg(2+) pocket. Substrate-binding positions include D96, N234, 238–242 (SWDRE), and 328–329 (RH). The short motif at 96–100 (DDLCD) is the DDXXD 1 element. An NSE/DTE motif is present at residues 234 to 242 (NDYWSWDRE). The tract at residues 333 to 706 (RDEESSPSER…VMRIVLSRLS (374 aa)) is prenyltransferase. Residues 334–373 (DEESSPSERSFSPSNEGIEDPRLSPGASTTSSMSQKSSPA) form a disordered region. Low complexity-rich tracts occupy residues 340–349 (SERSFSPSNE) and 361–373 (STTS…SSPA). 3 residues coordinate isopentenyl diphosphate: K414, R417, and H446. The Mg(2+) site is built by D453 and D457. The short motif at 453–457 (DDIED) is the DDXXD 2 element. R462 provides a ligand contact to dimethylallyl diphosphate. Residue R463 participates in isopentenyl diphosphate binding. Dimethylallyl diphosphate contacts are provided by K540, T541, Q580, N587, K597, and K607.

This sequence in the N-terminal section; belongs to the terpene synthase family. In the C-terminal section; belongs to the FPP/GGPP synthase family. In terms of assembly, hexamer. The cofactor is Mg(2+).

It catalyses the reaction isopentenyl diphosphate + (2E,6E)-farnesyl diphosphate = (2E,6E,10E)-geranylgeranyl diphosphate + diphosphate. The enzyme catalyses isopentenyl diphosphate + (2E,6E,10E)-geranylgeranyl diphosphate = (2E,6E,10E,14E)-geranylfarnesyl diphosphate + diphosphate. It functions in the pathway secondary metabolite biosynthesis; terpenoid biosynthesis. Its function is as follows. Bifunctional terpene synthase; part of the gene cluster that mediates the biosynthesis of betaestacins. The bifunctional terpene synthase btcA converts isopentenyl diphosphate (IPP) and dimethylallyl diphosphate (DMAPP) into the sesterterpene betaestacin I. The C-terminal prenyltransferase (PT) domain of btcA catalyzes formation of GFPP, whereas the N-terminal terpene cyclase (TC) domain catalyzes the cyclization of GFPP into betaestacin I. The cytochrome P450 monooxygenase btcB oxidizes the C25 methyl group of betaestacin I to yield the carboxylic acid betaestacin IV via the alcohol betaestacin III. The cytochrome P450 monooxygenase btcC further catalyzes the multistep oxidation of betaestacin IV to produce several compounds, including betaestacins Va, Vb, Vc and VI. The chain is Sesterterpene synthase btcA from Colletotrichum orbiculare (strain 104-T / ATCC 96160 / CBS 514.97 / LARS 414 / MAFF 240422) (Cucumber anthracnose fungus).